The primary structure comprises 333 residues: Probable malate dehydrogenase 3 (333 aa).

Residue 12-18 (GAAGQIA) coordinates NAD(+). Substrate is bound by residues R93 and R99. NAD(+) is bound by residues N106, Q113, and 130-132 (VGN). Substrate contacts are provided by N132 and R163. The active-site Proton acceptor is H188.

The protein belongs to the LDH/MDH superfamily. MDH type 2 family. In terms of assembly, homodimer.

The catalysed reaction is (S)-malate + NAD(+) = oxaloacetate + NADH + H(+). In terms of biological role, catalyzes the reversible oxidation of malate to oxaloacetate. This is Probable malate dehydrogenase 3 (mdhC) from Dictyostelium discoideum (Social amoeba).